The following is a 406-amino-acid chain: LIM/homeobox protein Lhx1 (406 aa).

2 consecutive LIM zinc-binding domains span residues 4–54 (CAGC…CKND) and 63–117 (CAGC…CKED). Disordered stretches follow at residues 128–189 (NSLH…TIKA) and 294–372 (DFFP…SAEV). Positions 137-148 (SDPSLSPDSQDP) are enriched in low complexity. Residues 151–167 (DDAKDSESANVSDKEGG) are compositionally biased toward basic and acidic residues. Phosphoserine is present on Ser-162. The segment at residues 180 to 239 (RRGPRTTIKAKQLETLKAAFAATPKPTRHIREQLAQETGLNMRVIQVWFQNRRSKERRMK) is a DNA-binding region (homeobox). Positions 315–327 (PSSGPSGTPLGGL) are enriched in low complexity. The span at 352–362 (GDSPSPEPSLP) shows a compositional bias: pro residues.

As to quaternary structure, interacts with LDB1 via the tandem LIM domains.

It is found in the nucleus. Functionally, potential transcription factor. May play a role in early mesoderm formation and later in lateral mesoderm differentiation and neurogenesis. The sequence is that of LIM/homeobox protein Lhx1 (Lhx1) from Mesocricetus auratus (Golden hamster).